The following is a 105-amino-acid chain: Pyrimidine/purine nucleoside phosphorylase (105 aa).

Belongs to the nucleoside phosphorylase PpnP family.

The enzyme catalyses a purine D-ribonucleoside + phosphate = a purine nucleobase + alpha-D-ribose 1-phosphate. It catalyses the reaction adenosine + phosphate = alpha-D-ribose 1-phosphate + adenine. It carries out the reaction cytidine + phosphate = cytosine + alpha-D-ribose 1-phosphate. The catalysed reaction is guanosine + phosphate = alpha-D-ribose 1-phosphate + guanine. The enzyme catalyses inosine + phosphate = alpha-D-ribose 1-phosphate + hypoxanthine. It catalyses the reaction thymidine + phosphate = 2-deoxy-alpha-D-ribose 1-phosphate + thymine. It carries out the reaction uridine + phosphate = alpha-D-ribose 1-phosphate + uracil. The catalysed reaction is xanthosine + phosphate = alpha-D-ribose 1-phosphate + xanthine. Functionally, catalyzes the phosphorolysis of diverse nucleosides, yielding D-ribose 1-phosphate and the respective free bases. Can use uridine, adenosine, guanosine, cytidine, thymidine, inosine and xanthosine as substrates. Also catalyzes the reverse reactions. This is Pyrimidine/purine nucleoside phosphorylase from Cupriavidus necator (strain ATCC 17699 / DSM 428 / KCTC 22496 / NCIMB 10442 / H16 / Stanier 337) (Ralstonia eutropha).